The following is a 138-amino-acid chain: Basic phospholipase A2 Drk-b1 (138 aa).

A signal peptide spans 1–16 (MRTLWIVAMCLIGVEG). 7 disulfide bridges follow: C42–C131, C44–C60, C59–C111, C65–C138, C66–C104, C73–C97, and C91–C102. Residues Y43, G45, and G47 each contribute to the Ca(2+) site. Residue H63 is part of the active site. D64 is a binding site for Ca(2+). D105 is a catalytic residue.

The cofactor is Ca(2+). Expressed by the venom gland.

Its subcellular location is the secreted. It catalyses the reaction a 1,2-diacyl-sn-glycero-3-phosphocholine + H2O = a 1-acyl-sn-glycero-3-phosphocholine + a fatty acid + H(+). Its function is as follows. Exhibits high hydrolytic activities and shows strong preference for the anionic micelles (dPPC with deoxycholate) to the zwitterionic micelles (dPPC with Triton X-100). PLA2 catalyzes the calcium-dependent hydrolysis of the 2-acyl groups in 3-sn-phosphoglycerides. This Daboia russelii (Russel's viper) protein is Basic phospholipase A2 Drk-b1.